Here is a 266-residue protein sequence, read N- to C-terminus: Methyl-coenzyme M reductase II subunit gamma (266 aa).

Residue Arg123 participates in coenzyme M binding.

The protein belongs to the methyl-coenzyme M reductase gamma subunit family. In terms of assembly, MCR is a hexamer of two alpha, two beta, and two gamma chains, forming a dimer of heterotrimers. Requires coenzyme F430 as cofactor.

The catalysed reaction is coenzyme B + methyl-coenzyme M = methane + coenzyme M-coenzyme B heterodisulfide. It functions in the pathway one-carbon metabolism; methyl-coenzyme M reduction; methane from methyl-coenzyme M: step 1/1. Its function is as follows. Component of the methyl-coenzyme M reductase (MCR) I that catalyzes the reductive cleavage of methyl-coenzyme M (CoM-S-CH3 or 2-(methylthio)ethanesulfonate) using coenzyme B (CoB or 7-mercaptoheptanoylthreonine phosphate) as reductant which results in the production of methane and the mixed heterodisulfide of CoB and CoM (CoM-S-S-CoB). This is the final step in methanogenesis. The polypeptide is Methyl-coenzyme M reductase II subunit gamma (mrtG) (Methanocaldococcus jannaschii (strain ATCC 43067 / DSM 2661 / JAL-1 / JCM 10045 / NBRC 100440) (Methanococcus jannaschii)).